The chain runs to 560 residues: Alpha-farnesene synthase (560 aa).

Mg(2+)-binding residues include D308, D312, and E462. A DDXXD motif motif is present at residues 308 to 312; the sequence is DDIYD.

This sequence belongs to the terpene synthase family. Tpsa subfamily. The cofactor is Mg(2+). In terms of tissue distribution, expressed in the rind tissues of ripe fruits.

The protein resides in the cytoplasm. It carries out the reaction (2E,6E)-farnesyl diphosphate = (3E,6E)-alpha-farnesene + diphosphate. It functions in the pathway secondary metabolite biosynthesis; terpenoid biosynthesis. In terms of biological role, sesquiterpene synthase producing exclusively alpha-farnesene. Associated with the production of sesquiterpenes responsible for the aroma of the fruit. The polypeptide is Alpha-farnesene synthase (Cucumis melo (Muskmelon)).